The sequence spans 75 residues: Translational regulator CsrA (75 aa).

Belongs to the CsrA/RsmA family. Homodimer; the beta-strands of each monomer intercalate to form a hydrophobic core, while the alpha-helices form wings that extend away from the core.

It localises to the cytoplasm. In terms of biological role, a translational regulator that binds mRNA to regulate translation initiation and/or mRNA stability. Usually binds in the 5'-UTR at or near the Shine-Dalgarno sequence preventing ribosome-binding, thus repressing translation. Its main target seems to be the major flagellin gene, while its function is anatagonized by FliW. The sequence is that of Translational regulator CsrA from Treponema denticola (strain ATCC 35405 / DSM 14222 / CIP 103919 / JCM 8153 / KCTC 15104).